Here is a 688-residue protein sequence, read N- to C-terminus: UvrABC system protein B (688 aa).

Positions 31-188 constitute a Helicase ATP-binding domain; it reads GRVNAGEPDV…RKFVSMQYQR (158 aa). 44–51 lines the ATP pocket; the sequence is GATGTGKS. A Beta-hairpin motif is present at residues 97–120; the sequence is YYDYYQPEAYVPQTDTFIEKDSSV. A Helicase C-terminal domain is found at 434–587; that stretch reads QIDDLLEQIR…QVAYNTEHGI (154 aa). The interval 607 to 632 is disordered; it reads GEDTKKMLEGRGGGKRSPTPNLRREG. The 36-residue stretch at 642 to 677 folds into the UVR domain; the sequence is ETIISDLNDQMLQAAGELKFELAARLRDELGDLKRE.

Belongs to the UvrB family. In terms of assembly, forms a heterotetramer with UvrA during the search for lesions. Interacts with UvrC in an incision complex.

Its subcellular location is the cytoplasm. The UvrABC repair system catalyzes the recognition and processing of DNA lesions. A damage recognition complex composed of 2 UvrA and 2 UvrB subunits scans DNA for abnormalities. Upon binding of the UvrA(2)B(2) complex to a putative damaged site, the DNA wraps around one UvrB monomer. DNA wrap is dependent on ATP binding by UvrB and probably causes local melting of the DNA helix, facilitating insertion of UvrB beta-hairpin between the DNA strands. Then UvrB probes one DNA strand for the presence of a lesion. If a lesion is found the UvrA subunits dissociate and the UvrB-DNA preincision complex is formed. This complex is subsequently bound by UvrC and the second UvrB is released. If no lesion is found, the DNA wraps around the other UvrB subunit that will check the other stand for damage. This chain is UvrABC system protein B, found in Clavibacter sepedonicus (Clavibacter michiganensis subsp. sepedonicus).